The following is a 96-amino-acid chain: UPF0251 protein VPA0321 (96 aa).

The protein belongs to the UPF0251 family.

The chain is UPF0251 protein VPA0321 from Vibrio parahaemolyticus serotype O3:K6 (strain RIMD 2210633).